Consider the following 1871-residue polypeptide: Girdin (1871 aa).

One can recognise a Calponin-homology (CH) domain in the interval 12–132 (QFMTSPLVTW…KLLLLLLGCA (121 aa)). Positions 196 to 425 (HLKRLIDERD…EMAQKQSMDE (230 aa)) form a coiled coil. Phosphoserine occurs at positions 233, 237, and 449. Positions 458 to 1385 (TSSRLLKLEM…KIMDQYKFYD (928 aa)) form a coiled coil. Disordered stretches follow at residues 816–842 (ENKS…KRLR) and 1010–1035 (RQDE…RESQ). S1020 bears the Phosphoserine mark. Residues 1026–1035 (EDNKWERESQ) show a composition bias toward basic and acidic residues. Phosphoserine is present on S1387. Residues 1390-1408 (RRRGNWITLKMRKLIKSKK) are phosphoinositide-binding. Basic and acidic residues predominate over residues 1407-1416 (KKDINRERQK). 2 disordered regions span residues 1407–1459 (KKDI…LGTK) and 1559–1601 (TTSF…SNNN). S1417 bears the Phosphoserine; by PKB/AKT1 mark. Polar residues-rich tracts occupy residues 1417 to 1430 (SLTL…SSEG), 1445 to 1459 (VGSN…LGTK), and 1559 to 1578 (TTSF…STGS). T1421 bears the Phosphothreonine mark. The short motif at 1672-1702 (KTGSPGSEVVTLQQFLEESNKLTSVQIKSSS) is the GBA element. Phosphothreonine is present on T1673. S1675 carries the phosphoserine modification. S1690 carries the phosphoserine; by PKC/PRKCQ modification. The SH2-like; required for interaction with growth factor receptors stretch occupies residues 1713–1823 (SLSVSSDFLG…GTTRRTSIHD (111 aa)). S1717 bears the Phosphoserine mark. A disordered region spans residues 1736 to 1871 (SGKTPGDFYD…KSRSREQQSS (136 aa)). Over residues 1743–1763 (FYDRRTTKPEFLRPGPRKTED) the composition is skewed to basic and acidic residues. Phosphotyrosine occurs at positions 1765 and 1799. 2 stretches are compositionally biased toward polar residues: residues 1787–1799 (SSLS…SNPY) and 1807–1818 (SVISTAEGTTRR). A phosphoserine mark is found at S1820 and S1837. Positions 1820 to 1830 (SIHDFLTKDSR) are enriched in basic and acidic residues. Positions 1838–1851 (PPAAADSNTTAASN) are enriched in low complexity. Positions 1854–1871 (KVQESRNSKSRSREQQSS) are enriched in basic and acidic residues.

It belongs to the CCDC88 family. As to quaternary structure, homodimer. Interacts (via GBA motif) with guanine nucleotide-binding protein G(i) alpha subunits GNAI1, GNAI2 and GNAI3. Also interacts (via GNA motif) with guanine nucleotide-binding protein G(s) alpha subunit GNAS. Interaction with G(i) alpha subunits occurs before interaction with GNAS and is regulated by phosphorylation; phosphorylation at Ser-1675 enhances binding to G(i) alpha subunits while phosphorylation at Ser-1690 abolishes G(i) alpha subunit binding, promoting binding to GNAS. Interacts (via C-terminal SH2-like region) with growth factor receptors EGFR, INSR and KDR/VEGFR2 (via their autophosphorylated cytoplasmic tails). Forms a complex with EGFR and GNAI3 which leads to enhanced EGFR signaling and triggering of cell migration; ligand stimulation is required for recruitment of GNAI3 to the complex. Interacts (tyrosine-phosphorylated form) with phosphatidylinositol 3-kinase (PI3K) regulatory subunit PIK3R1/p85a (via SH2 domains); the interaction enables recruitment of PIK3R1 to the EGFR receptor, enhancing PI3K activity and cell migration. Interacts with serine/threonine-protein kinase PRKCQ; the interaction leads to phosphorylation of CCDC88A and inhibition of its guanine nucleotide exchange factor activity. Interacts (via C-terminus) with DISC1; the interaction is direct. Interacts with AKT proteins; the interaction is inhibited in the presence of DISC1. Interacts with AKT1/PKB (via C-terminus). The non-phosphorylated form interacts with phosphatidylinositol 4-phosphate [PI(4)P] and weakly with phosphatidylinositol 3-phosphate [PI(3)P]. Interacts with microtubules. Interacts with actin. Post-translationally, phosphorylation is induced by epidermal growth factor (EGF) in a phosphoinositide 3-kinase (PI3K)-dependent manner. Phosphorylation by AKT1/PKB is necessary for delocalization from the cell membrane and for cell migration. Phosphorylated on tyrosine residues which promotes binding to phosphatidylinositol 3-kinase (PI3K) regulatory subunit PIK3R1/p85a and enhances PI3K activity. Tyrosine-phosphorylated by both receptor and non-receptor tyrosine kinases in vitro. Tyrosine phosphorylation is required for AKT1-dependent phosphorylation of Ser-1417. Phosphorylation at Ser-1690 by PRKCQ disrupts interaction with GNAI3 and inhibits guanine nucleotide exchange factor activity. As to expression, expressed ubiquitously.

The protein localises to the cell membrane. Its subcellular location is the cytoplasm. It localises to the cytosol. It is found in the cytoplasmic vesicle. The protein resides in the cell projection. The protein localises to the lamellipodium. Its subcellular location is the cytoskeleton. It localises to the cilium basal body. It is found in the microtubule organizing center. The protein resides in the centrosome. The protein localises to the centriole. Its function is as follows. Bifunctional modulator of guanine nucleotide-binding proteins (G proteins). Acts as a non-receptor guanine nucleotide exchange factor which binds to and activates guanine nucleotide-binding protein G(i) alpha subunits. Also acts as a guanine nucleotide dissociation inhibitor for guanine nucleotide-binding protein G(s) subunit alpha GNAS. Essential for cell migration. Interacts in complex with G(i) alpha subunits with the EGFR receptor, retaining EGFR at the cell membrane following ligand stimulation and promoting EGFR signaling which triggers cell migration. Binding to Gi-alpha subunits displaces the beta and gamma subunits from the heterotrimeric G-protein complex which enhances phosphoinositide 3-kinase (PI3K)-dependent phosphorylation and kinase activity of AKT1/PKB. Phosphorylation of AKT1/PKB induces the phosphorylation of downstream effectors GSK3 and FOXO1/FKHR, and regulates DNA replication and cell proliferation. Binds in its tyrosine-phosphorylated form to the phosphatidylinositol 3-kinase (PI3K) regulatory subunit PIK3R1 which enables recruitment of PIK3R1 to the EGFR receptor, enhancing PI3K activity and cell migration. Plays a role as a key modulator of the AKT-mTOR signaling pathway, controlling the tempo of the process of newborn neuron integration during adult neurogenesis, including correct neuron positioning, dendritic development and synapse formation. Inhibition of G(s) subunit alpha GNAS leads to reduced cellular levels of cAMP and suppression of cell proliferation. Essential for the integrity of the actin cytoskeleton. Required for formation of actin stress fibers and lamellipodia. May be involved in membrane sorting in the early endosome. Plays a role in ciliogenesis and cilium morphology and positioning and this may partly be through regulation of the localization of scaffolding protein CROCC/Rootletin. The chain is Girdin (CCDC88A) from Homo sapiens (Human).